We begin with the raw amino-acid sequence, 463 residues long: Cysteine--tRNA ligase (463 aa).

Cysteine 29 provides a ligand contact to Zn(2+). The 'HIGH' region motif lies at 31 to 41 (MTIYDLCHIGH). 3 residues coordinate Zn(2+): cysteine 218, histidine 243, and glutamate 247. Positions 275-279 (KMSKS) match the 'KMSKS' region motif. Lysine 278 serves as a coordination point for ATP.

The protein belongs to the class-I aminoacyl-tRNA synthetase family. Monomer. Zn(2+) is required as a cofactor.

It localises to the cytoplasm. The catalysed reaction is tRNA(Cys) + L-cysteine + ATP = L-cysteinyl-tRNA(Cys) + AMP + diphosphate. This chain is Cysteine--tRNA ligase, found in Polaromonas naphthalenivorans (strain CJ2).